Reading from the N-terminus, the 20-residue chain is GMP synthase [glutamine-hydrolyzing] (20 aa).

The 20-residue stretch at 1–20 (ALGDQLLSVFVDHTLVDEVA) folds into the GMPS ATP-PPase domain.

As to quaternary structure, homodimer.

The catalysed reaction is XMP + L-glutamine + ATP + H2O = GMP + L-glutamate + AMP + diphosphate + 2 H(+). The protein operates within purine metabolism; GMP biosynthesis; GMP from XMP (L-Gln route): step 1/1. Functionally, catalyzes the synthesis of GMP from XMP. The sequence is that of GMP synthase [glutamine-hydrolyzing] (guaA) from Fructilactobacillus sanfranciscensis (Lactobacillus sanfranciscensis).